We begin with the raw amino-acid sequence, 440 residues long: UDP-N-acetylmuramoylalanine--D-glutamate ligase (440 aa).

113–119 contacts ATP; the sequence is GTNGKST.

Belongs to the MurCDEF family.

It is found in the cytoplasm. It catalyses the reaction UDP-N-acetyl-alpha-D-muramoyl-L-alanine + D-glutamate + ATP = UDP-N-acetyl-alpha-D-muramoyl-L-alanyl-D-glutamate + ADP + phosphate + H(+). It participates in cell wall biogenesis; peptidoglycan biosynthesis. Functionally, cell wall formation. Catalyzes the addition of glutamate to the nucleotide precursor UDP-N-acetylmuramoyl-L-alanine (UMA). The chain is UDP-N-acetylmuramoylalanine--D-glutamate ligase from Buchnera aphidicola subsp. Acyrthosiphon pisum (strain Tuc7).